The primary structure comprises 409 residues: Cobalt-precorrin-5B C(1)-methyltransferase (409 aa).

The protein belongs to the CbiD family.

The catalysed reaction is Co-precorrin-5B + S-adenosyl-L-methionine = Co-precorrin-6A + S-adenosyl-L-homocysteine. It functions in the pathway cofactor biosynthesis; adenosylcobalamin biosynthesis; cob(II)yrinate a,c-diamide from sirohydrochlorin (anaerobic route): step 6/10. Catalyzes the methylation of C-1 in cobalt-precorrin-5B to form cobalt-precorrin-6A. This is Cobalt-precorrin-5B C(1)-methyltransferase from Methanopyrus kandleri (strain AV19 / DSM 6324 / JCM 9639 / NBRC 100938).